Consider the following 63-residue polypeptide: MAKDTGKTVKVRLVRGLRGTQSRHRLSVHALGLNKINDVRELKDSPQVRGLINTVHYLVKVED.

Belongs to the universal ribosomal protein uL30 family. In terms of assembly, part of the 50S ribosomal subunit.

This chain is Large ribosomal subunit protein uL30, found in Xanthomonas campestris pv. campestris (strain 8004).